Here is a 291-residue protein sequence, read N- to C-terminus: Homoserine kinase (291 aa).

80–90 (RPASGLGSSAA) serves as a coordination point for ATP.

It belongs to the GHMP kinase family. Homoserine kinase subfamily.

It localises to the cytoplasm. It carries out the reaction L-homoserine + ATP = O-phospho-L-homoserine + ADP + H(+). It functions in the pathway amino-acid biosynthesis; L-threonine biosynthesis; L-threonine from L-aspartate: step 4/5. In terms of biological role, catalyzes the ATP-dependent phosphorylation of L-homoserine to L-homoserine phosphate. This Natronomonas pharaonis (strain ATCC 35678 / DSM 2160 / CIP 103997 / JCM 8858 / NBRC 14720 / NCIMB 2260 / Gabara) (Halobacterium pharaonis) protein is Homoserine kinase.